A 350-amino-acid polypeptide reads, in one-letter code: MRRLLKPIKDVGIVGYGAYVPMFRIKNEEIGRVWGVNGFPIQEKSVNNLDEDAITIGIEAARNALKRARINPREIRALWFGTESKPYAVKPSATVIAEAIGATPDLDAADFEFACKAGTEALQAAIGFVGSGMAKYAMAIGADTSQGRPGDHLEFTASAGGAAYIVGEKTSDTLAYFEGSYSYVTDTPDFWRRQHEHYPRHGNRFTGEPAYFHQIISAAKGLMEELDYSPSDFDFAVFHQPNVKFPLTVAKILGIPKEKVLPGLLSGIIGNTYSGATLVGISAVLDIAKPGDRILWVSFGSGAGSDAFSLIVQDAIEEKRELAPKTMDYVNRKKYLDYALYAKHRGKYIL.

Glutamate 83 functions as the Proton donor/acceptor in the catalytic mechanism. Residue cysteine 115 is the Acyl-thioester intermediate of the active site. Residues cysteine 115 and threonine 156 each contribute to the (3S)-3-hydroxy-3-methylglutaryl-CoA site. Arginine 204 is a CoA binding site. Positions 206 and 239 each coordinate (3S)-3-hydroxy-3-methylglutaryl-CoA. Histidine 239 acts as the Proton donor/acceptor in catalysis. Lysine 244 contacts CoA. (3S)-3-hydroxy-3-methylglutaryl-CoA is bound by residues asparagine 271 and serine 301.

Belongs to the thiolase-like superfamily. Archaeal HMG-CoA synthase family. Interacts with acetoacetyl-CoA thiolase that catalyzes the precedent step in the pathway and with a DUF35 protein. The acetoacetyl-CoA thiolase/HMG-CoA synthase complex channels the intermediate via a fused CoA-binding site, which allows for efficient coupling of the endergonic thiolase reaction with the exergonic HMGCS reaction.

The catalysed reaction is acetoacetyl-CoA + acetyl-CoA + H2O = (3S)-3-hydroxy-3-methylglutaryl-CoA + CoA + H(+). It participates in metabolic intermediate biosynthesis; (R)-mevalonate biosynthesis; (R)-mevalonate from acetyl-CoA: step 2/3. In terms of biological role, catalyzes the condensation of acetyl-CoA with acetoacetyl-CoA to form 3-hydroxy-3-methylglutaryl-CoA (HMG-CoA). Functions in the mevalonate (MVA) pathway leading to isopentenyl diphosphate (IPP), a key precursor for the biosynthesis of isoprenoid compounds that are building blocks of archaeal membrane lipids. The sequence is that of Hydroxymethylglutaryl-CoA synthase from Thermococcus sibiricus (strain DSM 12597 / MM 739).